The following is a 270-amino-acid chain: tRNA pseudouridine synthase A (270 aa).

Asp-52 acts as the Nucleophile in catalysis. Substrate is bound at residue Tyr-110. A disordered region spans residues 251 to 270; sequence TGAADEPAAPHGVTETRMQL.

The protein belongs to the tRNA pseudouridine synthase TruA family. Homodimer.

It catalyses the reaction uridine(38/39/40) in tRNA = pseudouridine(38/39/40) in tRNA. Functionally, formation of pseudouridine at positions 38, 39 and 40 in the anticodon stem and loop of transfer RNAs. The protein is tRNA pseudouridine synthase A of Roseiflexus sp. (strain RS-1).